Here is a 311-residue protein sequence, read N- to C-terminus: Bifunctional protein FolD (311 aa).

NADP(+) contacts are provided by residues 180–182, serine 209, and isoleucine 250; that span reads GRS.

This sequence belongs to the tetrahydrofolate dehydrogenase/cyclohydrolase family. In terms of assembly, homodimer.

The catalysed reaction is (6R)-5,10-methylene-5,6,7,8-tetrahydrofolate + NADP(+) = (6R)-5,10-methenyltetrahydrofolate + NADPH. It carries out the reaction (6R)-5,10-methenyltetrahydrofolate + H2O = (6R)-10-formyltetrahydrofolate + H(+). The protein operates within one-carbon metabolism; tetrahydrofolate interconversion. Functionally, catalyzes the oxidation of 5,10-methylenetetrahydrofolate to 5,10-methenyltetrahydrofolate and then the hydrolysis of 5,10-methenyltetrahydrofolate to 10-formyltetrahydrofolate. The chain is Bifunctional protein FolD from Haloquadratum walsbyi (strain DSM 16790 / HBSQ001).